Here is a 262-residue protein sequence, read N- to C-terminus: Indole-3-glycerol phosphate synthase (262 aa).

This sequence belongs to the TrpC family.

It catalyses the reaction 1-(2-carboxyphenylamino)-1-deoxy-D-ribulose 5-phosphate + H(+) = (1S,2R)-1-C-(indol-3-yl)glycerol 3-phosphate + CO2 + H2O. It functions in the pathway amino-acid biosynthesis; L-tryptophan biosynthesis; L-tryptophan from chorismate: step 4/5. This chain is Indole-3-glycerol phosphate synthase, found in Bordetella avium (strain 197N).